Here is a 268-residue protein sequence, read N- to C-terminus: Ribosomal RNA small subunit methyltransferase A (268 aa).

Positions 18, 20, 45, 66, 91, and 112 each coordinate S-adenosyl-L-methionine.

It belongs to the class I-like SAM-binding methyltransferase superfamily. rRNA adenine N(6)-methyltransferase family. RsmA subfamily.

Its subcellular location is the cytoplasm. The catalysed reaction is adenosine(1518)/adenosine(1519) in 16S rRNA + 4 S-adenosyl-L-methionine = N(6)-dimethyladenosine(1518)/N(6)-dimethyladenosine(1519) in 16S rRNA + 4 S-adenosyl-L-homocysteine + 4 H(+). Its function is as follows. Specifically dimethylates two adjacent adenosines (A1518 and A1519) in the loop of a conserved hairpin near the 3'-end of 16S rRNA in the 30S particle. May play a critical role in biogenesis of 30S subunits. This chain is Ribosomal RNA small subunit methyltransferase A, found in Shewanella sp. (strain MR-7).